The chain runs to 488 residues: Glutamyl-tRNA(Gln) amidotransferase subunit A (488 aa).

Active-site charge relay system residues include Lys-77 and Ser-152. Ser-176 (acyl-ester intermediate) is an active-site residue.

The protein belongs to the amidase family. GatA subfamily. As to quaternary structure, heterotrimer of A, B and C subunits.

The enzyme catalyses L-glutamyl-tRNA(Gln) + L-glutamine + ATP + H2O = L-glutaminyl-tRNA(Gln) + L-glutamate + ADP + phosphate + H(+). Its function is as follows. Allows the formation of correctly charged Gln-tRNA(Gln) through the transamidation of misacylated Glu-tRNA(Gln) in organisms which lack glutaminyl-tRNA synthetase. The reaction takes place in the presence of glutamine and ATP through an activated gamma-phospho-Glu-tRNA(Gln). In Streptococcus pyogenes serotype M49 (strain NZ131), this protein is Glutamyl-tRNA(Gln) amidotransferase subunit A.